Consider the following 348-residue polypeptide: Dihydroorotase (348 aa).

Residues H14 and H16 each contribute to the Zn(2+) site. Substrate contacts are provided by residues 16-18 (HLR) and N42. Zn(2+)-binding residues include K100, H137, and H175. K100 carries the N6-carboxylysine modification. H137 is a binding site for substrate. L220 contacts substrate. D248 lines the Zn(2+) pocket. Residue D248 is part of the active site. Residues H252 and A264 each coordinate substrate.

The protein belongs to the metallo-dependent hydrolases superfamily. DHOase family. Class II DHOase subfamily. As to quaternary structure, homodimer. The cofactor is Zn(2+).

It carries out the reaction (S)-dihydroorotate + H2O = N-carbamoyl-L-aspartate + H(+). The protein operates within pyrimidine metabolism; UMP biosynthesis via de novo pathway; (S)-dihydroorotate from bicarbonate: step 3/3. Catalyzes the reversible cyclization of carbamoyl aspartate to dihydroorotate. The sequence is that of Dihydroorotase from Pseudomonas aeruginosa (strain ATCC 15692 / DSM 22644 / CIP 104116 / JCM 14847 / LMG 12228 / 1C / PRS 101 / PAO1).